A 404-amino-acid polypeptide reads, in one-letter code: Probable tRNA sulfurtransferase (404 aa).

One can recognise a THUMP domain in the interval 60 to 165 (HEVAESLKEI…DEAAYISYEN (106 aa)). Residues 183 to 184 (ML), 208 to 209 (HF), Arg265, Gly287, and Gln296 each bind ATP.

The protein belongs to the ThiI family.

Its subcellular location is the cytoplasm. It carries out the reaction [ThiI sulfur-carrier protein]-S-sulfanyl-L-cysteine + a uridine in tRNA + 2 reduced [2Fe-2S]-[ferredoxin] + ATP + H(+) = [ThiI sulfur-carrier protein]-L-cysteine + a 4-thiouridine in tRNA + 2 oxidized [2Fe-2S]-[ferredoxin] + AMP + diphosphate. The enzyme catalyses [ThiS sulfur-carrier protein]-C-terminal Gly-Gly-AMP + S-sulfanyl-L-cysteinyl-[cysteine desulfurase] + AH2 = [ThiS sulfur-carrier protein]-C-terminal-Gly-aminoethanethioate + L-cysteinyl-[cysteine desulfurase] + A + AMP + 2 H(+). Its pathway is cofactor biosynthesis; thiamine diphosphate biosynthesis. In terms of biological role, catalyzes the ATP-dependent transfer of a sulfur to tRNA to produce 4-thiouridine in position 8 of tRNAs, which functions as a near-UV photosensor. Also catalyzes the transfer of sulfur to the sulfur carrier protein ThiS, forming ThiS-thiocarboxylate. This is a step in the synthesis of thiazole, in the thiamine biosynthesis pathway. The sulfur is donated as persulfide by IscS. The protein is Probable tRNA sulfurtransferase of Streptococcus agalactiae serotype Ia (strain ATCC 27591 / A909 / CDC SS700).